The chain runs to 208 residues: Octanoyltransferase (208 aa).

Residues 29–208 enclose the BPL/LPL catalytic domain; sequence KTQDELVWLL…KEFNKVFCNC (180 aa). Substrate-binding positions include 68 to 75, 140 to 142, and 153 to 155; these read RGGKYTYH, AFG, and GVS. The Acyl-thioester intermediate role is filled by Cys171.

The protein belongs to the LipB family.

It is found in the cytoplasm. It catalyses the reaction octanoyl-[ACP] + L-lysyl-[protein] = N(6)-octanoyl-L-lysyl-[protein] + holo-[ACP] + H(+). It participates in protein modification; protein lipoylation via endogenous pathway; protein N(6)-(lipoyl)lysine from octanoyl-[acyl-carrier-protein]: step 1/2. Catalyzes the transfer of endogenously produced octanoic acid from octanoyl-acyl-carrier-protein onto the lipoyl domains of lipoate-dependent enzymes. Lipoyl-ACP can also act as a substrate although octanoyl-ACP is likely to be the physiological substrate. The sequence is that of Octanoyltransferase from Ehrlichia ruminantium (strain Gardel).